The primary structure comprises 412 residues: MSIENSAVSDHSGVNKVVLAYSGGLDTSAIIPWLKETYDNCEIVAFCADVGQGDAELEGLYEKAIASGASECYIVDLKEELVADYIYPTIATGAIYEGTYLLGTSMARPIIAKAQVEVARKVGADAVCHGCTGKGNDQVRFEGCFAALAPDLKVIAPWREWEMVSREDLLDYLAERNIATAASATKIYSRDANAWHISHEGGELEDPWNEPSKGVWTMTVAPEDAPNQPEYVSLELEQGKITKVNGEALSPYKALMVLNEVAGAHGVGRIDITENRLVGMKSRGCYETPGGTVMFAALRAIEELVLDKTSREWREQVGAQMAHLVYDGRWFTPLCESLLGASKPLADLVNGEVVVKLYKGQASVVKKRSPNSLYSEEFATFGADDVYNQKDAEGFIRLYSLSSRIRALHSQK.

ATP-binding positions include 20–28 (AYSGGLDTS) and A48. Residues Y100 and S105 each coordinate L-citrulline. G130 lines the ATP pocket. T132, N136, and D137 together coordinate L-aspartate. N136 contacts L-citrulline. R140, S189, S198, E274, and Y286 together coordinate L-citrulline.

This sequence belongs to the argininosuccinate synthase family. Type 1 subfamily. In terms of assembly, homotetramer.

The protein resides in the cytoplasm. It carries out the reaction L-citrulline + L-aspartate + ATP = 2-(N(omega)-L-arginino)succinate + AMP + diphosphate + H(+). It participates in amino-acid biosynthesis; L-arginine biosynthesis; L-arginine from L-ornithine and carbamoyl phosphate: step 2/3. The protein is Argininosuccinate synthase of Shewanella pealeana (strain ATCC 700345 / ANG-SQ1).